Here is a 445-residue protein sequence, read N- to C-terminus: MSGHGPAQPMTARRSGPLKGRAEIPGDKSISHRALILGAMAVGETQITGLLEGQDVLDTAKAMRAFGAEVIQHGPGAWSVHGVGVGGFAEPAEVIDCGNSGTGVRLVMGAMATSPLTATFTGDASLRKRPMGRVTDPLALFGTRAYGRKGGRLPMTLVGAADPVPVRYTVPMPSAQVKSAVLLAGLNAPGQTVVIEREATRDHSERMLRGFGAELSVETGPEGQIITLTGQPELRPQTVAVPRDPSSAAFPVCAALIVEGSEILVPGVSRNPTRDGLYVTLLEMGADIAFENEREEGGEPVADLRVRASALKGVEVPPERAPSMIDEYPILSVVAAFAEGSTIMRGVKELRVKESDRIDAMARGLEACGVRIEEDEDTLIVHGMGRVPGGATCATHLDHRIAMSFLVLGMAAEAPVTVDDGSPIATSFPAFTDLMTGLGADLAAG.

The disordered stretch occupies residues 1-25 (MSGHGPAQPMTARRSGPLKGRAEIP). 3-phosphoshikimate is bound by residues K28, S29, and R33. Phosphoenolpyruvate is bound at residue K28. Residues G101 and R129 each coordinate phosphoenolpyruvate. The 3-phosphoshikimate site is built by S174, Q176, D326, and K353. Q176 contacts phosphoenolpyruvate. Residue D326 is the Proton acceptor of the active site. Phosphoenolpyruvate-binding residues include R357 and R400.

This sequence belongs to the EPSP synthase family. Monomer.

Its subcellular location is the cytoplasm. The enzyme catalyses 3-phosphoshikimate + phosphoenolpyruvate = 5-O-(1-carboxyvinyl)-3-phosphoshikimate + phosphate. The protein operates within metabolic intermediate biosynthesis; chorismate biosynthesis; chorismate from D-erythrose 4-phosphate and phosphoenolpyruvate: step 6/7. Catalyzes the transfer of the enolpyruvyl moiety of phosphoenolpyruvate (PEP) to the 5-hydroxyl of shikimate-3-phosphate (S3P) to produce enolpyruvyl shikimate-3-phosphate and inorganic phosphate. The sequence is that of 3-phosphoshikimate 1-carboxyvinyltransferase from Cereibacter sphaeroides (strain ATCC 17029 / ATH 2.4.9) (Rhodobacter sphaeroides).